The following is a 272-amino-acid chain: Rhamnulose-1-phosphate aldolase (272 aa).

E117 is an active-site residue. Zn(2+) contacts are provided by H141, H143, and H212.

The protein belongs to the aldolase class II family. RhaD subfamily. Zn(2+) serves as cofactor.

It localises to the cytoplasm. It carries out the reaction L-rhamnulose 1-phosphate = (S)-lactaldehyde + dihydroxyacetone phosphate. The protein operates within carbohydrate degradation; L-rhamnose degradation; glycerone phosphate from L-rhamnose: step 3/3. Catalyzes the reversible cleavage of L-rhamnulose-1-phosphate to dihydroxyacetone phosphate (DHAP) and L-lactaldehyde. The protein is Rhamnulose-1-phosphate aldolase of Mannheimia succiniciproducens (strain KCTC 0769BP / MBEL55E).